A 409-amino-acid chain; its full sequence is Arginine biosynthesis bifunctional protein ArgJ (409 aa).

6 residues coordinate substrate: T156, K182, T193, E280, N404, and S409. T193 functions as the Nucleophile in the catalytic mechanism.

It belongs to the ArgJ family. In terms of assembly, heterotetramer of two alpha and two beta chains.

The protein localises to the cytoplasm. The catalysed reaction is N(2)-acetyl-L-ornithine + L-glutamate = N-acetyl-L-glutamate + L-ornithine. It carries out the reaction L-glutamate + acetyl-CoA = N-acetyl-L-glutamate + CoA + H(+). It participates in amino-acid biosynthesis; L-arginine biosynthesis; L-ornithine and N-acetyl-L-glutamate from L-glutamate and N(2)-acetyl-L-ornithine (cyclic): step 1/1. It functions in the pathway amino-acid biosynthesis; L-arginine biosynthesis; N(2)-acetyl-L-ornithine from L-glutamate: step 1/4. Functionally, catalyzes two activities which are involved in the cyclic version of arginine biosynthesis: the synthesis of N-acetylglutamate from glutamate and acetyl-CoA as the acetyl donor, and of ornithine by transacetylation between N(2)-acetylornithine and glutamate. The sequence is that of Arginine biosynthesis bifunctional protein ArgJ from Nitrosomonas europaea (strain ATCC 19718 / CIP 103999 / KCTC 2705 / NBRC 14298).